Reading from the N-terminus, the 478-residue chain is Glycogen synthase (478 aa).

An ADP-alpha-D-glucose-binding site is contributed by Lys-15.

Belongs to the glycosyltransferase 1 family. Bacterial/plant glycogen synthase subfamily.

It carries out the reaction [(1-&gt;4)-alpha-D-glucosyl](n) + ADP-alpha-D-glucose = [(1-&gt;4)-alpha-D-glucosyl](n+1) + ADP + H(+). It functions in the pathway glycan biosynthesis; glycogen biosynthesis. In terms of biological role, synthesizes alpha-1,4-glucan chains using ADP-glucose. The chain is Glycogen synthase from Lactococcus lactis subsp. lactis (strain IL1403) (Streptococcus lactis).